The primary structure comprises 732 residues: Protein FAR1-RELATED SEQUENCE 4 (732 aa).

The region spanning 11–97 (LFYKDYAKSV…VKEHNHDLLP (87 aa)) is the FAR1 domain. One can recognise an MULE domain in the interval 212 to 308 (VVSFETSYFV…CLWHVLDQLP (97 aa)). The SWIM-type zinc-finger motif lies at 490–526 (YLVDWDEFKSDIYCSCRSFEYKGYLCRHAIVVLQMSG). Residues 623–683 (QEENQYGSTS…ETVGEGSQEG (61 aa)) form a disordered region. Over residues 624-635 (EENQYGSTSTQI) the composition is skewed to polar residues.

Belongs to the FHY3/FAR1 family. In terms of tissue distribution, expressed in hypocotyls, rosette and cauline leaves, inflorescences stems, flowers and siliques.

The protein localises to the nucleus. Functionally, putative transcription activator involved in regulating light control of development. In Arabidopsis thaliana (Mouse-ear cress), this protein is Protein FAR1-RELATED SEQUENCE 4 (FRS4).